The sequence spans 51 residues: Small, acid-soluble spore protein K (51 aa).

Residues 1–51 are disordered; it reads MRNKAKGFPNPISFNGNKANNADEHASKRPDGTTRDRPQERMRSSNHFNSL. The span at 21–43 shows a compositional bias: basic and acidic residues; it reads NADEHASKRPDGTTRDRPQERMR.

The protein belongs to the SspK family.

The protein resides in the spore core. The chain is Small, acid-soluble spore protein K from Shouchella clausii (strain KSM-K16) (Alkalihalobacillus clausii).